Here is a 168-residue protein sequence, read N- to C-terminus: Plastocyanin B, chloroplastic (168 aa).

Residues 1-69 (MAAVTSAAVS…SAMIASNAMA (69 aa)) constitute a chloroplast transit peptide. In terms of domain architecture, Plastocyanin-like spans 70–168 (VDVLLGADDG…AGMVGKVIVN (99 aa)). Residues His-106, Cys-153, His-156, and Met-161 each coordinate Cu cation.

The protein belongs to the plastocyanin family. Cu(2+) is required as a cofactor.

It is found in the plastid. The protein resides in the chloroplast thylakoid membrane. Functionally, participates in electron transfer between P700 and the cytochrome b6-f complex in photosystem I. The polypeptide is Plastocyanin B, chloroplastic (PETE) (Populus nigra (Lombardy poplar)).